The primary structure comprises 337 residues: Fructose-1,6-bisphosphatase class 1 (337 aa).

Residues E91, D113, L115, and D116 each contribute to the Mg(2+) site. Substrate is bound by residues 116 to 119 (DGSS), N209, Y242, and K275. E281 contributes to the Mg(2+) binding site.

It belongs to the FBPase class 1 family. As to quaternary structure, homotetramer. It depends on Mg(2+) as a cofactor.

It is found in the cytoplasm. The enzyme catalyses beta-D-fructose 1,6-bisphosphate + H2O = beta-D-fructose 6-phosphate + phosphate. The protein operates within carbohydrate biosynthesis; gluconeogenesis. This chain is Fructose-1,6-bisphosphatase class 1, found in Nitratidesulfovibrio vulgaris (strain DP4) (Desulfovibrio vulgaris).